We begin with the raw amino-acid sequence, 239 residues long: MNDPFIVALDFSSGKEVRTFLQPFSHTSLFVKVGMELYYQEGPAIIHSLKEQGHRIFLDLKLHDIPNTVKRAMQGLARLEVDLVNVHAAGGTRMMEAALEGLEAGTPNGARRPYCIAVTQLTSTSEQMLHNELWIGRTMEETVLHYAALAKQSGLDGVVCSAKEVPLIRKHCGEAFLTVTPGIRFADDEKNDQVRVVTPYEAKKLGASFIVIGRSITRAENPIAAYERLQQEWKGEEKK.

Residues D10, K32, 59 to 68 (DLKLHDIPNT), T122, R184, Q193, G213, and R214 contribute to the substrate site. K61 acts as the Proton donor in catalysis.

It belongs to the OMP decarboxylase family. Type 1 subfamily. In terms of assembly, homodimer.

The catalysed reaction is orotidine 5'-phosphate + H(+) = UMP + CO2. The protein operates within pyrimidine metabolism; UMP biosynthesis via de novo pathway; UMP from orotate: step 2/2. Catalyzes the decarboxylation of orotidine 5'-monophosphate (OMP) to uridine 5'-monophosphate (UMP). This is Orotidine 5'-phosphate decarboxylase from Geobacillus sp. (strain WCH70).